A 742-amino-acid chain; its full sequence is Pyriculol/pyriculariol biosynthesis cluster transcription factor 1 (742 aa).

Positions 23 to 49 (CVLCQHRKIKCDRSFPCANCQRANVQC) form a DNA-binding region, zn(2)-C6 fungal-type. Residues 85-116 (GKPDIARLTTKRSSLSQSPPKGEEPLPEWNRH) form a disordered region. Over residues 105–116 (KGEEPLPEWNRH) the composition is skewed to basic and acidic residues.

It is found in the nucleus. In terms of biological role, transcriptional regulator; part of the gene cluster that mediates the biosynthesis of pyriculol and pyriculariol, two heptaketides that induce lesion formation upon application on rice leaves but are dispensable for pathogenicity. With TRF2, negatively regulates the expression of the gene cluster and the subsequent pyriculol and pyriculariol production. The polypeptide is Pyriculol/pyriculariol biosynthesis cluster transcription factor 1 (Pyricularia oryzae (strain 70-15 / ATCC MYA-4617 / FGSC 8958) (Rice blast fungus)).